A 329-amino-acid chain; its full sequence is Vomeronasal type-1 receptor 42 (329 aa).

At M1 to T32 the chain is on the extracellular side. Residues F33 to L53 form a helical membrane-spanning segment. Residues K54 to D65 are Cytoplasmic-facing. Residues L66–A86 traverse the membrane as a helical segment. At T87–R109 the chain is on the extracellular side. A disulfide bridge connects residues C101 and C188. The chain crosses the membrane as a helical span at residues V110–L130. At S131–G150 the chain is on the cytoplasmic side. Residues A151–I171 traverse the membrane as a helical segment. Residues A172–E209 lie on the Extracellular side of the membrane. N175 carries an N-linked (GlcNAc...) asparagine glycan. Residues F210–H230 form a helical membrane-spanning segment. Topologically, residues R231–Q254 are cytoplasmic. The helical transmembrane segment at T255–C275 threads the bilayer. Residues S276 to T285 lie on the Extracellular side of the membrane. The helical transmembrane segment at S286 to M306 threads the bilayer. The Cytoplasmic segment spans residues S307 to H329.

The protein belongs to the G-protein coupled receptor 1 family.

It is found in the cell membrane. Putative pheromone receptor implicated in the regulation of social and reproductive behavior. The chain is Vomeronasal type-1 receptor 42 (Vmn1r42) from Mus musculus (Mouse).